A 429-amino-acid chain; its full sequence is MRAELNQGLIDFLKASPTPFHATASLARRLEAAGYRRLDERDAWHTETGGRYYVTRNDSSLIAIRLGRRSPLESGFRLVGAHTDSPCLRVKPNPEIARNGFLQLGVEVYGGALFAPWFDRDLSLAGRVTFRANGKLESRLVDFRKAIAVIPNLAIHLNRAANEGWPINAQNELPPIIAQLAPGEAADFRLLLDEQLLREHGITADVVLDYELSFYDTQSAAVVGLNDEFIAGARLDNLLSCHAGLEALLNAEGDENCILVCTDHEEVGSCSHCGADGPFLEQVLRRLLPEGDAFSRAIQRSLLVSADNAHGVHPNYADRHDANHGPALNGGPVIKINSNQRYATNSETAGFFRHLCQDSEVPVQSFVTRSDMGCGSTIGPITASQVGVRTVDIGLPTFAMHSIRELAGSHDLAHLVKVLGAFYASSELP.

The Zn(2+) site is built by H82, H156, and H401.

The protein belongs to the peptidase M18 family. Zn(2+) is required as a cofactor.

The polypeptide is Probable M18 family aminopeptidase 2 (Pseudomonas aeruginosa (strain LESB58)).